The sequence spans 126 residues: Aspartate 1-decarboxylase (126 aa).

The Schiff-base intermediate with substrate; via pyruvic acid role is filled by S25. S25 bears the Pyruvic acid (Ser) mark. T57 serves as a coordination point for substrate. The active-site Proton donor is the Y58. Position 72 to 74 (72 to 74 (GAA)) interacts with substrate.

Belongs to the PanD family. As to quaternary structure, heterooctamer of four alpha and four beta subunits. The cofactor is pyruvate. Post-translationally, is synthesized initially as an inactive proenzyme, which is activated by self-cleavage at a specific serine bond to produce a beta-subunit with a hydroxyl group at its C-terminus and an alpha-subunit with a pyruvoyl group at its N-terminus.

It is found in the cytoplasm. The catalysed reaction is L-aspartate + H(+) = beta-alanine + CO2. It participates in cofactor biosynthesis; (R)-pantothenate biosynthesis; beta-alanine from L-aspartate: step 1/1. In terms of biological role, catalyzes the pyruvoyl-dependent decarboxylation of aspartate to produce beta-alanine. The protein is Aspartate 1-decarboxylase of Campylobacter jejuni subsp. jejuni serotype O:6 (strain 81116 / NCTC 11828).